The primary structure comprises 156 residues: Large ribosomal subunit protein uL15 (156 aa).

Residues 26–46 (GIGCGKGKTSGRGHKGQKARS) form a disordered region. Over residues 34-43 (TSGRGHKGQK) the composition is skewed to basic residues.

Belongs to the universal ribosomal protein uL15 family. As to quaternary structure, part of the 50S ribosomal subunit.

Its function is as follows. Binds to the 23S rRNA. In Ehrlichia canis (strain Jake), this protein is Large ribosomal subunit protein uL15.